The chain runs to 155 residues: 6,7-dimethyl-8-ribityllumazine synthase (155 aa).

5-amino-6-(D-ribitylamino)uracil is bound by residues tryptophan 24, alanine 58–glutamate 60, and alanine 82–isoleucine 84. Residue glycine 87–threonine 88 participates in (2S)-2-hydroxy-3-oxobutyl phosphate binding. Residue histidine 90 is the Proton donor of the active site. 5-amino-6-(D-ribitylamino)uracil is bound at residue phenylalanine 115. Arginine 129 lines the (2S)-2-hydroxy-3-oxobutyl phosphate pocket.

The protein belongs to the DMRL synthase family. In terms of assembly, forms an icosahedral capsid composed of 60 subunits, arranged as a dodecamer of pentamers.

The catalysed reaction is (2S)-2-hydroxy-3-oxobutyl phosphate + 5-amino-6-(D-ribitylamino)uracil = 6,7-dimethyl-8-(1-D-ribityl)lumazine + phosphate + 2 H2O + H(+). The protein operates within cofactor biosynthesis; riboflavin biosynthesis; riboflavin from 2-hydroxy-3-oxobutyl phosphate and 5-amino-6-(D-ribitylamino)uracil: step 1/2. Catalyzes the formation of 6,7-dimethyl-8-ribityllumazine by condensation of 5-amino-6-(D-ribitylamino)uracil with 3,4-dihydroxy-2-butanone 4-phosphate. This is the penultimate step in the biosynthesis of riboflavin. The chain is 6,7-dimethyl-8-ribityllumazine synthase from Teredinibacter turnerae (strain ATCC 39867 / T7901).